A 254-amino-acid chain; its full sequence is Protein EFFECTOR OF TRANSCRIPTION 3 (254 aa).

Positions 103-152 (RCTGLYELGVGVIGQDQGQNFDPDNNVLGVYVGQCVDVKSRLQDYGRRGG) constitute a GIY-YIG domain.

Its subcellular location is the cytoplasm. In Arabidopsis thaliana (Mouse-ear cress), this protein is Protein EFFECTOR OF TRANSCRIPTION 3.